The following is a 368-amino-acid chain: L-lactate oxidase (368 aa).

Residues 13 to 368 form the FMN hydroxy acid dehydrogenase domain; that stretch reads VNAIDVLDLA…KQMKVKTTFA (356 aa). Pyruvate is bound at residue Tyr-39. FMN-binding positions include 92–94, Ser-121, and Gln-143; that span reads PIA. Tyr-145 serves as a coordination point for pyruvate. An FMN-binding site is contributed by Thr-171. Pyruvate is bound at residue Arg-180. FMN-binding residues include Lys-239 and Ser-261. Pyruvate contacts are provided by His-263 and Arg-266. The active-site Proton acceptor is His-263. FMN contacts are provided by residues 294-298 and Arg-318; that span reads DGGVQ.

The protein belongs to the FMN-dependent alpha-hydroxy acid dehydrogenase family. Homotetramer. It depends on FMN as a cofactor.

The catalysed reaction is (S)-lactate + O2 = pyruvate + H2O2. The enzyme catalyses 2-hydroxyoctanoate + O2 = 2-oxooctanoate + H2O2. Its function is as follows. Catalyzes the oxidation of (S)-lactate (L-lactate) to pyruvate, with a reduction of O2 to H2O2. To a lesser extent is also able to use 2-hydroxyoctanoate as substrate. May be involved in the utilization of L-lactate as an energy source for growth. This chain is L-lactate oxidase, found in Lacticaseibacillus rhamnosus (strain LMS2-1).